The primary structure comprises 380 residues: S-adenosylmethionine:tRNA ribosyltransferase-isomerase (380 aa).

Positions 1–15 are enriched in basic and acidic residues; the sequence is MHSKHPTDTARRCET. A disordered region spans residues 1–24; it reads MHSKHPTDTARRCETGTDSSDTAA.

It belongs to the QueA family. Monomer.

Its subcellular location is the cytoplasm. The catalysed reaction is 7-aminomethyl-7-carbaguanosine(34) in tRNA + S-adenosyl-L-methionine = epoxyqueuosine(34) in tRNA + adenine + L-methionine + 2 H(+). Its pathway is tRNA modification; tRNA-queuosine biosynthesis. Transfers and isomerizes the ribose moiety from AdoMet to the 7-aminomethyl group of 7-deazaguanine (preQ1-tRNA) to give epoxyqueuosine (oQ-tRNA). The protein is S-adenosylmethionine:tRNA ribosyltransferase-isomerase of Oleidesulfovibrio alaskensis (strain ATCC BAA-1058 / DSM 17464 / G20) (Desulfovibrio alaskensis).